Here is a 200-residue protein sequence, read N- to C-terminus: Potassium-transporting ATPase KdpC subunit (200 aa).

The helical transmembrane segment at 7 to 27 (PALVMIVLFTILTGLIYPLAM) threads the bilayer.

This sequence belongs to the KdpC family. As to quaternary structure, the system is composed of three essential subunits: KdpA, KdpB and KdpC.

Its subcellular location is the cell inner membrane. Its function is as follows. Part of the high-affinity ATP-driven potassium transport (or Kdp) system, which catalyzes the hydrolysis of ATP coupled with the electrogenic transport of potassium into the cytoplasm. This subunit acts as a catalytic chaperone that increases the ATP-binding affinity of the ATP-hydrolyzing subunit KdpB by the formation of a transient KdpB/KdpC/ATP ternary complex. The protein is Potassium-transporting ATPase KdpC subunit of Methylocella silvestris (strain DSM 15510 / CIP 108128 / LMG 27833 / NCIMB 13906 / BL2).